We begin with the raw amino-acid sequence, 291 residues long: Acetyl-coenzyme A carboxylase carboxyl transferase subunit beta (291 aa).

A disordered region spans residues 1-23; the sequence is MSWLSKLMPSGIRTDNTPSKKRS. Residues 28–291 form the CoA carboxyltransferase N-terminal domain; it reads LWEKCSNCGS…LGRQPAPEVA (264 aa). Residues Cys-32, Cys-35, Cys-51, and Cys-54 each coordinate Zn(2+). Residues 32 to 54 form a C4-type zinc finger; that stretch reads CSNCGSALYRPELEENLEVCPKC.

Belongs to the AccD/PCCB family. As to quaternary structure, acetyl-CoA carboxylase is a heterohexamer composed of biotin carboxyl carrier protein (AccB), biotin carboxylase (AccC) and two subunits each of ACCase subunit alpha (AccA) and ACCase subunit beta (AccD). Requires Zn(2+) as cofactor.

The protein localises to the cytoplasm. The enzyme catalyses N(6)-carboxybiotinyl-L-lysyl-[protein] + acetyl-CoA = N(6)-biotinyl-L-lysyl-[protein] + malonyl-CoA. It participates in lipid metabolism; malonyl-CoA biosynthesis; malonyl-CoA from acetyl-CoA: step 1/1. Its function is as follows. Component of the acetyl coenzyme A carboxylase (ACC) complex. Biotin carboxylase (BC) catalyzes the carboxylation of biotin on its carrier protein (BCCP) and then the CO(2) group is transferred by the transcarboxylase to acetyl-CoA to form malonyl-CoA. The protein is Acetyl-coenzyme A carboxylase carboxyl transferase subunit beta of Stenotrophomonas maltophilia (strain K279a).